Consider the following 92-residue polypeptide: UPF0250 protein XAC0666 (92 aa).

The protein belongs to the UPF0250 family.

This chain is UPF0250 protein XAC0666, found in Xanthomonas axonopodis pv. citri (strain 306).